A 226-amino-acid polypeptide reads, in one-letter code: Protein GrpE (226 aa).

2 disordered regions span residues 1–31 and 189–226; these read MTPNDTENAARPLPEGAVDPAQDAAGAPDTL and VSKGGPKAAEASKPAGEAPKPAGEAPKPAGDGQKPAEA. The span at 192 to 218 shows a compositional bias: low complexity; sequence GGPKAAEASKPAGEAPKPAGEAPKPAG.

This sequence belongs to the GrpE family. In terms of assembly, homodimer.

It localises to the cytoplasm. In terms of biological role, participates actively in the response to hyperosmotic and heat shock by preventing the aggregation of stress-denatured proteins, in association with DnaK and GrpE. It is the nucleotide exchange factor for DnaK and may function as a thermosensor. Unfolded proteins bind initially to DnaJ; upon interaction with the DnaJ-bound protein, DnaK hydrolyzes its bound ATP, resulting in the formation of a stable complex. GrpE releases ADP from DnaK; ATP binding to DnaK triggers the release of the substrate protein, thus completing the reaction cycle. Several rounds of ATP-dependent interactions between DnaJ, DnaK and GrpE are required for fully efficient folding. The protein is Protein GrpE of Methylobacterium nodulans (strain LMG 21967 / CNCM I-2342 / ORS 2060).